Reading from the N-terminus, the 502-residue chain is L-arabinose isomerase (502 aa).

Mn(2+) contacts are provided by Glu307, Glu334, His351, and His450.

The protein belongs to the arabinose isomerase family. The cofactor is Mn(2+).

The catalysed reaction is beta-L-arabinopyranose = L-ribulose. It participates in carbohydrate degradation; L-arabinose degradation via L-ribulose; D-xylulose 5-phosphate from L-arabinose (bacterial route): step 1/3. Its function is as follows. Catalyzes the conversion of L-arabinose to L-ribulose. The sequence is that of L-arabinose isomerase from Nocardioides sp. (strain ATCC BAA-499 / JS614).